The sequence spans 406 residues: Protein phosphatase 2C (406 aa).

Residues Arg-23 to Phe-274 enclose the PPM-type phosphatase domain. The Mn(2+) site is built by Asp-55, Gly-56, Asp-221, and Asp-265.

The protein belongs to the PP2C family. In terms of assembly, monomer. The cofactor is Mg(2+). Mn(2+) serves as cofactor.

It catalyses the reaction O-phospho-L-seryl-[protein] + H2O = L-seryl-[protein] + phosphate. The catalysed reaction is O-phospho-L-threonyl-[protein] + H2O = L-threonyl-[protein] + phosphate. In terms of biological role, enzyme with a broad specificity. This Leishmania chagasi protein is Protein phosphatase 2C.